The sequence spans 201 residues: Potassium-transporting ATPase KdpC subunit (201 aa).

The helical transmembrane segment at 12–34 threads the bilayer; that stretch reads LLALTMITGLAYPLAVTGLATVL. A disordered region spans residues 73–102; sequence TVAPDPADSSKTVSAPYNAANSGGSNLGPT. The span at 81-101 shows a compositional bias: polar residues; that stretch reads SSKTVSAPYNAANSGGSNLGP.

It belongs to the KdpC family. As to quaternary structure, the system is composed of three essential subunits: KdpA, KdpB and KdpC.

The protein localises to the cell inner membrane. In terms of biological role, part of the high-affinity ATP-driven potassium transport (or Kdp) system, which catalyzes the hydrolysis of ATP coupled with the electrogenic transport of potassium into the cytoplasm. This subunit acts as a catalytic chaperone that increases the ATP-binding affinity of the ATP-hydrolyzing subunit KdpB by the formation of a transient KdpB/KdpC/ATP ternary complex. The chain is Potassium-transporting ATPase KdpC subunit from Rhodopseudomonas palustris (strain ATCC BAA-98 / CGA009).